The sequence spans 375 residues: Chlorophyll a/b light-harvesting protein PcbC (375 aa).

The next 6 helical transmembrane spans lie at 40-60, 102-122, 151-171, 225-245, 262-282, and 300-320; these read LLGAHIAHAGLIAFWAGSITV, YFVIGILHLVTSAVLGAGGLF, LSLILGHHLLLLGILCLAFVA, IIGGHVYIGILELIGGTWHIL, AILSYSLGAVGWMGLLSGFFV, and GAAAVQYILGVLLLVGHVWHA. Residues 352–375 are disordered; the sequence is ARTFIGRGKPQPEPPKKKGLFGRG.

The protein belongs to the PsbB/PsbC family. IsiA/Pcb subfamily. The antenna complex consists of chlorophylls (a and b) and chlorophyll a/b binding proteins. Chlorophyll a serves as cofactor. Requires chlorophyll b as cofactor.

The protein localises to the cellular thylakoid membrane. In terms of biological role, the antenna complex functions as a light receptor, it captures and delivers excitation energy to photosystems II and I. The Prochlorales pcb genes are not related to higher plant LHCs. This is Chlorophyll a/b light-harvesting protein PcbC (pcbC) from Prochlorothrix hollandica.